A 973-amino-acid polypeptide reads, in one-letter code: Mediator of RNA polymerase II transcription subunit 16 (973 aa).

The protein belongs to the Mediator complex subunit 16 family. Component of the Mediator complex.

It localises to the nucleus. Component of the Mediator complex, a coactivator involved in the regulated transcription of nearly all RNA polymerase II-dependent genes. Mediator functions as a bridge to convey information from gene-specific regulatory proteins to the basal RNA polymerase II transcription machinery. Mediator is recruited to promoters by direct interactions with regulatory proteins and serves as a scaffold for the assembly of a functional preinitiation complex with RNA polymerase II and the general transcription factors. The chain is Mediator of RNA polymerase II transcription subunit 16 (SIN4) from Candida glabrata (strain ATCC 2001 / BCRC 20586 / JCM 3761 / NBRC 0622 / NRRL Y-65 / CBS 138) (Yeast).